The primary structure comprises 314 residues: Mitochondrial RNA-splicing protein MRS3 (314 aa).

Solcar repeat units follow at residues 31–118, 128–210, and 217–310; these read APLY…CKKN, HHPF…STKF, and YNPL…AKHF. Transmembrane regions (helical) follow at residues 33–52, 93–112, 130–149, 185–204, 219–238, and 285–298; these read LYHQ…SVMF, GVQS…FGTY, PFKT…ALMN, SYPT…FVIY, PLIH…AITT, and GWKP…PATA.

Belongs to the mitochondrial carrier (TC 2.A.29) family.

It is found in the mitochondrion inner membrane. Functionally, MRS3 suppresses a mitochondrial splice defect in the first intron of the COB gene. It may act as a carrier, exerting its suppressor activity via modulation of solute concentrations in the mitochondrion (possibly of cations). The chain is Mitochondrial RNA-splicing protein MRS3 (MRS3) from Saccharomyces cerevisiae (strain ATCC 204508 / S288c) (Baker's yeast).